We begin with the raw amino-acid sequence, 194 residues long: Endoribonuclease YbeY (194 aa).

Residues His151, His155, and His161 each coordinate Zn(2+).

It belongs to the endoribonuclease YbeY family. The cofactor is Zn(2+).

The protein localises to the cytoplasm. Its function is as follows. Single strand-specific metallo-endoribonuclease involved in late-stage 70S ribosome quality control and in maturation of the 3' terminus of the 16S rRNA. This chain is Endoribonuclease YbeY, found in Gloeobacter violaceus (strain ATCC 29082 / PCC 7421).